An 806-amino-acid polypeptide reads, in one-letter code: Leucine--tRNA ligase (806 aa).

The 'HIGH' region signature appears at 54–64 (SYPSGDLHMGH). The 'KMSKS' region signature appears at 571-575 (KMSKS). Position 574 (K574) interacts with ATP.

This sequence belongs to the class-I aminoacyl-tRNA synthetase family.

It localises to the cytoplasm. It catalyses the reaction tRNA(Leu) + L-leucine + ATP = L-leucyl-tRNA(Leu) + AMP + diphosphate. This Tropheryma whipplei (strain Twist) (Whipple's bacillus) protein is Leucine--tRNA ligase.